The primary structure comprises 819 residues: Pentatricopeptide repeat-containing protein At1g52620 (819 aa).

18 PPR repeats span residues 98 to 132, 133 to 163, 169 to 203, 204 to 238, 239 to 273, 274 to 308, 309 to 343, 344 to 378, 379 to 413, 414 to 448, 449 to 483, 484 to 518, 519 to 553, 554 to 588, 589 to 623, 624 to 659, 709 to 743, and 744 to 779; these read NGFA…NVKL, THEA…VVEL, DVIA…GDSV, DNYS…GCIP, NIVF…GFMP, TLET…GLRV, SVWF…DCKP, DVAT…GLIP, NNLS…GCKP, DIVT…GVSP, DAAI…NILP, DAYV…GVKV, DVVH…HLVP, DKFT…KCKP, NVVT…DLVP, NVVT…KCVP, HAAA…GFSP, and DPVS…GLEV.

Belongs to the PPR family. P subfamily.

The chain is Pentatricopeptide repeat-containing protein At1g52620 from Arabidopsis thaliana (Mouse-ear cress).